Reading from the N-terminus, the 70-residue chain is Small ribosomal subunit protein bS21C (70 aa).

The protein belongs to the bacterial ribosomal protein bS21 family.

This is Small ribosomal subunit protein bS21C from Burkholderia pseudomallei (strain 1710b).